Consider the following 701-residue polypeptide: Vacuolar protein sorting-associated protein 52 B (701 aa).

Coiled coils occupy residues 23–45 (FEED…EECE) and 511–533 (QLDI…LAKL).

This sequence belongs to the VPS52 family. As to quaternary structure, component of the Golgi-associated retrograde protein (GARP) complex. In terms of tissue distribution, detected in pollen.

The protein localises to the golgi apparatus. The protein resides in the trans-Golgi network membrane. It localises to the endosome membrane. It is found in the golgi apparatus membrane. Its function is as follows. May be involved in retrograde transport of early and late endosomes to the late Golgi. This is Vacuolar protein sorting-associated protein 52 B (P2) from Arabidopsis thaliana (Mouse-ear cress).